Consider the following 593-residue polypeptide: Gamma-humulene synthase (593 aa).

The span at 1–26 shows a compositional bias: polar residues; that stretch reads MAQISESVSPSTDLKSTESSITSNRH. The disordered stretch occupies residues 1–34; that stretch reads MAQISESVSPSTDLKSTESSITSNRHGNMWEDDR. Positions 343, 347, 488, and 496 each coordinate Mg(2+). Positions 343–347 match the DDXXD motif motif; the sequence is DDLYD.

It belongs to the terpene synthase family. Tpsd subfamily. The cofactor is Mg(2+). K(+) serves as cofactor.

It localises to the cytoplasm. It catalyses the reaction (2E,6E)-farnesyl diphosphate = gamma-humulene + diphosphate. The catalysed reaction is (2E,6E)-farnesyl diphosphate = sibirene + diphosphate. The enzyme catalyses (2E,6E)-farnesyl diphosphate = longifolene + diphosphate. It carries out the reaction (2E,6E)-farnesyl diphosphate = beta-himachalene + diphosphate. It catalyses the reaction (2E,6E)-farnesyl diphosphate = gamma-himachalene + diphosphate. The catalysed reaction is (2E,6E)-farnesyl diphosphate = alpha-himachalene + diphosphate. It participates in terpene metabolism; oleoresin biosynthesis. In terms of biological role, involved in defensive oleoresin formation in conifers in response to insect attack or other injury. Involved in 52 sesquiterpene (C15) olefins biosynthesis. This is Gamma-humulene synthase (ag5) from Abies grandis (Grand fir).